The chain runs to 464 residues: tRNA-2-methylthio-N(6)-dimethylallyladenosine synthase (464 aa).

Residues 1–25 are disordered; the sequence is MSDLVPLSRKPAPAAGDPAPSPAAP. In terms of domain architecture, MTTase N-terminal spans 27-142; it reads RKVYVHTFGC…LPEMVERARG (116 aa). [4Fe-4S] cluster is bound by residues Cys36, Cys72, Cys105, Cys180, Cys184, and Cys187. A Radical SAM core domain is found at 166 to 398; sequence ARGRATAFVT…LAAQRRIAGE (233 aa). One can recognise a TRAM domain in the interval 401–464; the sequence is AAELGKVVEV…GGSSLSGTLA (64 aa).

Belongs to the methylthiotransferase family. MiaB subfamily. Monomer. [4Fe-4S] cluster serves as cofactor.

The protein localises to the cytoplasm. The enzyme catalyses N(6)-dimethylallyladenosine(37) in tRNA + (sulfur carrier)-SH + AH2 + 2 S-adenosyl-L-methionine = 2-methylsulfanyl-N(6)-dimethylallyladenosine(37) in tRNA + (sulfur carrier)-H + 5'-deoxyadenosine + L-methionine + A + S-adenosyl-L-homocysteine + 2 H(+). Functionally, catalyzes the methylthiolation of N6-(dimethylallyl)adenosine (i(6)A), leading to the formation of 2-methylthio-N6-(dimethylallyl)adenosine (ms(2)i(6)A) at position 37 in tRNAs that read codons beginning with uridine. The sequence is that of tRNA-2-methylthio-N(6)-dimethylallyladenosine synthase from Anaeromyxobacter dehalogenans (strain 2CP-C).